We begin with the raw amino-acid sequence, 230 residues long: GTP cyclohydrolase III (230 aa).

It belongs to the archaeal-type GTP cyclohydrolase family.

The catalysed reaction is GTP + 3 H2O = 2-amino-5-formylamino-6-(5-phospho-D-ribosylamino)pyrimidin-4(3H)-one + 2 phosphate + 2 H(+). Its function is as follows. Catalyzes the formation of 2-amino-5-formylamino-6-ribofuranosylamino-4(3H)-pyrimidinone ribonucleotide monophosphate and inorganic phosphate from GTP. Also has an independent pyrophosphate phosphohydrolase activity. The chain is GTP cyclohydrolase III from Saccharolobus islandicus (strain M.16.27) (Sulfolobus islandicus).